A 959-amino-acid chain; its full sequence is Autophagy-related protein 18g (959 aa).

WD repeat units lie at residues 376 to 416 (AHTS…SHNA) and 438 to 479 (ITSA…AAFQ). A disordered region spans residues 802 to 832 (GSIESAESSEEGSTKQMENLHDSDHMSNSIK).

It belongs to the WD repeat PROPPIN family. As to quaternary structure, component of the PI(3,5)P2 regulatory complex at least composed of ATG18, SAC/FIG4, FAB1 and VAC14. As to expression, expressed in leaves.

It localises to the preautophagosomal structure membrane. The protein localises to the vacuole membrane. Functionally, the PI(3,5)P2 regulatory complex regulates both the synthesis and turnover of phosphatidylinositol 3,5-bisphosphate (PtdIns(3,5)P2). Required for autophagy. The protein is Autophagy-related protein 18g (ATG18G) of Arabidopsis thaliana (Mouse-ear cress).